The sequence spans 514 residues: MPNASQVYRSTRSSSPKTISFEEAIIQGLATDGGLFIPPTIPQVDQATLFNDWSKLSFQDLAFAIMRLYIAQEEIPDADLKDLIKRSYSTFRSDEVTPLVQNVTGDKENLHILELFHGPTYAFKDVALQFVGNLFEYFLQRTNANLPEGEKKQITVVGATSGDTGSAAIYGLRGKKDVSVFILYPTGRISPIQEEQMTTVPDENVQTLSVTGTFDNCQDIVKAIFGDKEFNSKHNVGAVNSINWARILAQMTYYFYSFFQATNGKDSKKVKFVVPSGNFGDILAGYFAKKMGLPIEKLAIATNENDILDRFLKSGLYERSDKVAATLSPAMDILISSNFERLLWYLAREYLANGDDLKAGEIVNNWFQELKTNGKFQVDKSIIEGASKDFTSERVSNEETSETIKKIYESSVNPKHYILDPHTAVGVCATERLIAKDNDKSIQYISLSTAHPAKFADAVNNALSGFSNYSFEKDVLPEELKKLSTLKKKLKFIERADVELVKNAIEEELAKMKL.

At Lys124 the chain carries N6-(pyridoxal phosphate)lysine. 5 residues coordinate pyridoxal 5'-phosphate: Gly277, Asn278, Phe279, Asp281, and Thr449. Ser467 is subject to Phosphoserine.

The protein belongs to the threonine synthase family. Pyridoxal 5'-phosphate serves as cofactor.

It catalyses the reaction O-phospho-L-homoserine + H2O = L-threonine + phosphate. It functions in the pathway amino-acid biosynthesis; L-threonine biosynthesis; L-threonine from L-aspartate: step 5/5. Its function is as follows. Catalyzes the gamma-elimination of phosphate from L-phosphohomoserine and the beta-addition of water to produce L-threonine. This is Threonine synthase (THR4) from Saccharomyces cerevisiae (strain ATCC 204508 / S288c) (Baker's yeast).